We begin with the raw amino-acid sequence, 137 residues long: Small ribosomal subunit protein uS9 (137 aa).

Belongs to the universal ribosomal protein uS9 family.

This chain is Small ribosomal subunit protein uS9 (rps9), found in Sulfurisphaera tokodaii (strain DSM 16993 / JCM 10545 / NBRC 100140 / 7) (Sulfolobus tokodaii).